The following is a 429-amino-acid chain: tRNA threonylcarbamoyladenosine dehydratase 1 (429 aa).

The next 2 helical transmembrane spans lie at 3 to 23 (NNTW…TQLA) and 74 to 94 (EQYI…TMLI). The residue at position 259 (Ser259) is a Phosphoserine. The helical transmembrane segment at 279–299 (LPELGTMPGIFGLSIATWILT) threads the bilayer.

It belongs to the HesA/MoeB/ThiF family.

It is found in the mitochondrion outer membrane. Its function is as follows. Catalyzes the ATP-dependent dehydration of threonylcarbamoyladenosine at position 37 (t(6)A37) to form cyclic t(6)A37 (ct(6)A37) in tRNAs that read codons beginning with adenine. The sequence is that of tRNA threonylcarbamoyladenosine dehydratase 1 (TCD1) from Saccharomyces cerevisiae (strain ATCC 204508 / S288c) (Baker's yeast).